The sequence spans 317 residues: UV DNA damage endonuclease (317 aa).

Belongs to the uve1/UvsE family.

Functionally, component in a DNA repair pathway. Removal of UV LIGHT damaged nucleotides. Recognizes pyrimidine dimers and cleave a phosphodiester bond immediately 5' to the lesion. This chain is UV DNA damage endonuclease, found in Bacillus thuringiensis subsp. konkukian (strain 97-27).